The following is a 506-amino-acid chain: Maturase K (506 aa).

Belongs to the intron maturase 2 family. MatK subfamily.

The protein localises to the plastid. The protein resides in the chloroplast. Its function is as follows. Usually encoded in the trnK tRNA gene intron. Probably assists in splicing its own and other chloroplast group II introns. The chain is Maturase K from Ocimum basilicum (Sweet basil).